A 433-amino-acid chain; its full sequence is MNTSLQDLEQEILAAVRHEVVPALGCTEPICVALAAAIGRTHLSSAPEKIAVRVSGNLMKNAMGVTVPGTGMVGLSIAAAVGAIGGDAEAGLQTLKSISAEDVAAAKKMLADDAVSVSMADTDHIFYAEVTLTAGAEIARVCIADTHTNVVLIEKNGKTIYQKPVAAADEKNPVAVFTKITAKDVFDFATTVDLEKIRFIKEAATLNSALSQEGLRTDYGLHIGRSLQKNIGNGLLSDDLLNRIIIETGAASDARMGGASLPAMSNSGSGNQGIAATMPVVVVARHLKSSEEKTIRALFLSHALAIYIHAKLPTLSSLCAANTAAMGSAGACAWLFSERFEAVSDTICSMIGDVSGMICDGAANSCAMKVISSITSGYKSMLMALDNTRVTGFEGIVEHDLERSINNLCALARESMQHVDQQIIDIMVQKPMH.

It belongs to the UPF0597 family.

The polypeptide is UPF0597 protein DNO_0106 (Dichelobacter nodosus (strain VCS1703A)).